Consider the following 175-residue polypeptide: Bifunctional protein PyrR (175 aa).

Residues 40-41 (TR), 102-110 (DDVLYTGRT), arginine 135, and valine 159 contribute to the substrate site. The PRPP-binding signature appears at 98–110 (VIIIDDVLYTGRT).

This sequence belongs to the purine/pyrimidine phosphoribosyltransferase family. PyrR subfamily. As to quaternary structure, homodimer and homohexamer; in equilibrium.

It carries out the reaction UMP + diphosphate = 5-phospho-alpha-D-ribose 1-diphosphate + uracil. Functionally, regulates transcriptional attenuation of the pyrimidine nucleotide (pyr) operon by binding in a uridine-dependent manner to specific sites on pyr mRNA. This disrupts an antiterminator hairpin in the RNA and favors formation of a downstream transcription terminator, leading to a reduced expression of downstream genes. Also displays a weak uracil phosphoribosyltransferase activity which is not physiologically significant. The chain is Bifunctional protein PyrR from Staphylococcus haemolyticus (strain JCSC1435).